Reading from the N-terminus, the 276-residue chain is Elongation factor Ts, mitochondrial (276 aa).

Belongs to the EF-Ts family.

Its subcellular location is the mitochondrion. In terms of biological role, associates with the EF-Tu.GDP complex and induces the exchange of GDP to GTP. It remains bound to the aminoacyl-tRNA.EF-Tu.GTP complex up to the GTP hydrolysis stage on the ribosome. This is Elongation factor Ts, mitochondrial from Leishmania major.